A 377-amino-acid polypeptide reads, in one-letter code: Molybdenum import ATP-binding protein ModC (377 aa).

The ABC transporter domain occupies 4–240; that stretch reads IAPRSIRGEF…PALPLATARD (237 aa). 38-45 serves as a coordination point for ATP; it reads GPSGCGKS. Residues 299 to 369 enclose the Mop domain; the sequence is RTSILNILPA…IKGVALAPER (71 aa).

This sequence belongs to the ABC transporter superfamily. Molybdate importer (TC 3.A.1.8) family. The complex is composed of two ATP-binding proteins (ModC), two transmembrane proteins (ModB) and a solute-binding protein (ModA).

It localises to the cell inner membrane. It catalyses the reaction molybdate(out) + ATP + H2O = molybdate(in) + ADP + phosphate + H(+). Part of the ABC transporter complex ModABC involved in molybdenum import. Responsible for energy coupling to the transport system. The polypeptide is Molybdenum import ATP-binding protein ModC (Rhodopseudomonas palustris (strain HaA2)).